Consider the following 100-residue polypeptide: Chorion class A protein M2774 (100 aa).

The segment at 1 to 33 (GGGWNGWNGLGGGWNGLGVGWSRLDGGYGGGCG) is left arm. Residues 34–81 (SYGGEGIGNVGVADELPVGGVTAVGGRVPIIGGVEYGGPARAAGAVSI) form a central domain region. The right arm stretch occupies residues 82–100 (CGHCAPTCGCGRAGLGGYY).

Belongs to the chorion protein family.

Functionally, this protein is one of many from the eggshell of the silk moth. The polypeptide is Chorion class A protein M2774 (Bombyx mori (Silk moth)).